Consider the following 191-residue polypeptide: ECF RNA polymerase sigma-E factor (191 aa).

The interval 1–153 (MSEQLTDQVL…MAITLRELDG (153 aa)) is binds RNAP core. Residues 25–92 (LVVRYQHKVA…KNYLVAQGRR (68 aa)) are sigma-70 factor domain-2. The short motif at 48–61 (DVVQEAFIKAYRAL) is the Polymerase core binding element. The segment at 129 to 180 (QIVFRTIESLPEDLRMAITLRELDGLSYEEIAAIMDCPVGTVRSRIFRAREA) is sigma-70 factor domain-4. The segment at residues 156–175 (YEEIAAIMDCPVGTVRSRIF) is a DNA-binding region (H-T-H motif).

It belongs to the sigma-70 factor family. ECF subfamily. As to quaternary structure, interacts transiently with the RNAP catalytic core formed by RpoA, RpoB, RpoC and RpoZ (2 alpha, 1 beta, 1 beta' and 1 omega subunit) to form the RNAP holoenzyme that can initiate transcription. Interacts 1:1 with anti-sigma-E factor RseA which prevents binding to RNAP catalytic core.

It localises to the cytoplasm. Its activity is regulated as follows. ECF sigma-E is held in an inactive form by its cognate anti-sigma factor (RseA) until released by regulated intramembrane proteolysis (RIP). RIP occurs when an extracytoplasmic signal (periplasmic stress and excess LPS) triggers a concerted proteolytic cascade to transmit information and elicit cellular responses. The anti-sigma factor RseA is an inner membrane protein, binding sigma-E in the cytoplasm and RseB in the periplasm. RseA is first cut extracytoplasmically (site-1 protease, S1P, by DegS), then within the membrane itself (site-2 protease, S2P, by RseP), while cytoplasmic proteases (predominantly ClpX-ClpP) finish degrading the regulatory protein, liberating sigma-E. Degradation of RseA requires 2 signals to activate DegS; an outer membrane protein (OMP) signal activates DegS, while an LPS signal causes release of RseB from RseA, freeing RseA to be cleaved. Functionally, sigma factors are initiation factors that promote the attachment of RNA polymerase (RNAP) to specific initiation sites and are then released. Extracytoplasmic function (ECF) sigma-E controls the envelope stress response, responding to periplasmic protein stress, increased levels of periplasmic lipopolysaccharide (LPS) as well as heat shock and oxidative stress; it controls protein processing in the extracytoplasmic compartment. The chain is ECF RNA polymerase sigma-E factor (rpoE) from Escherichia coli O157:H7.